Consider the following 472-residue polypeptide: Na(+)/H(+) antiporter NhaA (472 aa).

The next 11 membrane-spanning stretches (helical) occupy residues Ala48–Trp68, Met91–Leu111, Ala129–Val149, Ala157–Leu177, Leu185–Ala205, His210–Leu230, His237–Val257, Gly337–Phe357, Val374–Val394, Leu410–Leu430, and Leu443–Gly463.

This sequence belongs to the NhaA Na(+)/H(+) (TC 2.A.33) antiporter family.

The protein resides in the cell inner membrane. It carries out the reaction Na(+)(in) + 2 H(+)(out) = Na(+)(out) + 2 H(+)(in). Its function is as follows. Na(+)/H(+) antiporter that extrudes sodium in exchange for external protons. The chain is Na(+)/H(+) antiporter NhaA from Syntrophobacter fumaroxidans (strain DSM 10017 / MPOB).